A 649-amino-acid polypeptide reads, in one-letter code: DNA ligase (649 aa).

Residues 62–66 and 104–105 each bind NAD(+); these read DSTYD and ST. Residue Lys142 is the N6-AMP-lysine intermediate of the active site. Residues Arg158, Glu189, and Lys301 each contribute to the NAD(+) site. Zn(2+) is bound by residues Cys389, Cys392, Cys405, and Cys411. The BRCT domain maps to 569 to 649; the sequence is PGETPVFGKI…LDYLALISTY (81 aa).

The protein belongs to the NAD-dependent DNA ligase family. LigA subfamily. Mg(2+) serves as cofactor. Mn(2+) is required as a cofactor.

It catalyses the reaction NAD(+) + (deoxyribonucleotide)n-3'-hydroxyl + 5'-phospho-(deoxyribonucleotide)m = (deoxyribonucleotide)n+m + AMP + beta-nicotinamide D-nucleotide.. Functionally, DNA ligase that catalyzes the formation of phosphodiester linkages between 5'-phosphoryl and 3'-hydroxyl groups in double-stranded DNA using NAD as a coenzyme and as the energy source for the reaction. It is essential for DNA replication and repair of damaged DNA. In Psychromonas ingrahamii (strain DSM 17664 / CCUG 51855 / 37), this protein is DNA ligase.